An 89-amino-acid polypeptide reads, in one-letter code: Small ribosomal subunit protein uS15 (89 aa).

Belongs to the universal ribosomal protein uS15 family. In terms of assembly, part of the 30S ribosomal subunit. Forms a bridge to the 50S subunit in the 70S ribosome, contacting the 23S rRNA.

Functionally, one of the primary rRNA binding proteins, it binds directly to 16S rRNA where it helps nucleate assembly of the platform of the 30S subunit by binding and bridging several RNA helices of the 16S rRNA. Forms an intersubunit bridge (bridge B4) with the 23S rRNA of the 50S subunit in the ribosome. The polypeptide is Small ribosomal subunit protein uS15 (Granulibacter bethesdensis (strain ATCC BAA-1260 / CGDNIH1)).